The chain runs to 133 residues: Ribosome-binding factor A (133 aa).

The protein belongs to the RbfA family. In terms of assembly, monomer. Binds 30S ribosomal subunits, but not 50S ribosomal subunits or 70S ribosomes.

Its subcellular location is the cytoplasm. In terms of biological role, one of several proteins that assist in the late maturation steps of the functional core of the 30S ribosomal subunit. Associates with free 30S ribosomal subunits (but not with 30S subunits that are part of 70S ribosomes or polysomes). Required for efficient processing of 16S rRNA. May interact with the 5'-terminal helix region of 16S rRNA. This Acinetobacter baylyi (strain ATCC 33305 / BD413 / ADP1) protein is Ribosome-binding factor A.